We begin with the raw amino-acid sequence, 690 residues long: Serotransferrin (690 aa).

The N-terminal stretch at 1–17 (MKPLLLLTLLGCLAAAL) is a signal peptide. 2 Transferrin-like domains span residues 24 to 329 (VKWC…SLKK) and 340 to 670 (IKWC…SLRK). An intrachain disulfide couples C27 to C49. Fe(3+) contacts are provided by D73 and Y103. 3 disulfide bridges follow: C126–C206, C171–C185, and C234–C248. Residues T128, K132, A134, and G135 each contribute to the hydrogencarbonate site. Y200 is a binding site for Fe(3+). Fe(3+) is bound at residue H256. 2 disulfides stabilise this stretch: C343–C379 and C353–C370. D394 and Y429 together coordinate Fe(3+). Intrachain disulfides connect C404-C682, C419-C643, C452-C530, C476-C671, C486-C499, C496-C513, and C570-C584. The hydrogencarbonate site is built by T454, R458, A460, and G461. Residue Y524 participates in Fe(3+) binding. H592 provides a ligand contact to Fe(3+).

Belongs to the transferrin family. Monomer.

It localises to the secreted. Transferrins are iron binding transport proteins which can bind two Fe(3+) ions in association with the binding of an anion, usually bicarbonate. The protein is Serotransferrin (tf) of Oryzias latipes (Japanese rice fish).